The chain runs to 513 residues: Maturase K (513 aa).

This sequence belongs to the intron maturase 2 family. MatK subfamily.

It is found in the plastid. The protein resides in the chloroplast. Its function is as follows. Usually encoded in the trnK tRNA gene intron. Probably assists in splicing its own and other chloroplast group II introns. The polypeptide is Maturase K (Cynodon dactylon (Bermuda grass)).